A 358-amino-acid polypeptide reads, in one-letter code: RNA demethylase ALKBH5 (358 aa).

A disordered region spans residues 1–50; the sequence is MSATYTDLREKLQSLYRDSPKEVRKRKQPTSDTEEEEAASEPEEEEEARK. Basic and acidic residues predominate over residues 7–22; the sequence is DLREKLQSLYRDSPKE. Residues 32 to 46 show a composition bias toward acidic residues; sequence DTEEEEAASEPEEEE. The active site involves Tyr-105. 2-oxoglutarate is bound by residues Asn-159, Tyr-161, His-170, His-232, and Arg-243. Cys-196 and Cys-233 are joined by a disulfide. Disordered regions lie at residues 259–312 and 334–358; these read EMKS…RRSV and DYVDTYTETGEDDGSPVRKVKMRRH. Residues 262–278 show a composition bias toward polar residues; sequence SLSSSYQPERLQGSNRQ. Residues 279 to 288 are compositionally biased toward basic residues; that stretch reads HILKPKRSHR. The span at 289-310 shows a compositional bias: basic and acidic residues; the sequence is KADPDAAHRPRILEMDKEENRR.

This sequence belongs to the alkB family. As to quaternary structure, monomer. It depends on Fe(2+) as a cofactor.

Its subcellular location is the nucleus speckle. The enzyme catalyses an N(6)-methyladenosine in mRNA + 2-oxoglutarate + O2 = an adenosine in mRNA + formaldehyde + succinate + CO2. Functionally, dioxygenase that specifically demethylates N(6)-methyladenosine (m6A) RNA, the most prevalent internal modification of messenger RNA (mRNA) in higher eukaryotes. Demethylates RNA by oxidative demethylation, which requires molecular oxygen, alpha-ketoglutarate and iron. Demethylation of m6A mRNA affects mRNA processing, translation and export. This is RNA demethylase ALKBH5 (alkbh5) from Xenopus tropicalis (Western clawed frog).